The primary structure comprises 495 residues: Adenosylhomocysteinase (495 aa).

Substrate contacts are provided by Thr71, Asp156, and Glu218. NAD(+) is bound at residue 219-221; it reads TTT. Substrate contacts are provided by Lys248 and Asp252. NAD(+)-binding positions include Asn253, 282–287, Glu305, Asn340, 361–363, and Asn409; these read GYGDVG and IGH.

The protein belongs to the adenosylhomocysteinase family. It depends on NAD(+) as a cofactor.

It is found in the cytoplasm. It carries out the reaction S-adenosyl-L-homocysteine + H2O = L-homocysteine + adenosine. It functions in the pathway amino-acid biosynthesis; L-homocysteine biosynthesis; L-homocysteine from S-adenosyl-L-homocysteine: step 1/1. Functionally, may play a key role in the regulation of the intracellular concentration of adenosylhomocysteine. The chain is Adenosylhomocysteinase from Mycobacterium bovis (strain ATCC BAA-935 / AF2122/97).